The following is a 418-amino-acid chain: Metacaspase-4 (418 aa).

Residues H86 and C139 contribute to the active site. C139 is modified (S-nitrosocysteine). Positions 153-172 (GESTKKEAEDEDESEESSSR) are disordered.

It belongs to the peptidase C14B family. The two subunits are derived from the precursor sequence by an autocatalytic mechanism. Expressed in roots, cotyledons, leaves, cauline leaves, pollen and embryos.

The protein localises to the cytoplasm. The protein resides in the cytosol. Its activity is regulated as follows. Activated by Ca(2+) which induces self-processing and accelerates the rate of the enzyme activity, but has no effect on Km. Its function is as follows. Cysteine protease that cleaves specifically after arginine or lysine residues. Does not cleave caspase-specific substrates. Plays a positive regulatory role in biotic and abiotic stress-induced programmed cell death. In Arabidopsis thaliana (Mouse-ear cress), this protein is Metacaspase-4 (AMC4).